The sequence spans 407 residues: 1-deoxy-D-xylulose 5-phosphate reductoisomerase (407 aa).

The NADPH site is built by Thr-25, Gly-26, Ser-27, Ile-28, Asn-53, and Asn-136. Lys-137 lines the 1-deoxy-D-xylulose 5-phosphate pocket. Position 138 (Glu-138) interacts with NADPH. Asp-162 is a binding site for Mn(2+). Residues Ser-163, Glu-164, Ser-188, and His-211 each coordinate 1-deoxy-D-xylulose 5-phosphate. Glu-164 is a binding site for Mn(2+). Position 217 (Gly-217) interacts with NADPH. Positions 224, 229, 230, and 233 each coordinate 1-deoxy-D-xylulose 5-phosphate. Glu-233 is a binding site for Mn(2+).

Belongs to the DXR family. Requires Mg(2+) as cofactor. The cofactor is Mn(2+).

It carries out the reaction 2-C-methyl-D-erythritol 4-phosphate + NADP(+) = 1-deoxy-D-xylulose 5-phosphate + NADPH + H(+). It functions in the pathway isoprenoid biosynthesis; isopentenyl diphosphate biosynthesis via DXP pathway; isopentenyl diphosphate from 1-deoxy-D-xylulose 5-phosphate: step 1/6. Catalyzes the NADPH-dependent rearrangement and reduction of 1-deoxy-D-xylulose-5-phosphate (DXP) to 2-C-methyl-D-erythritol 4-phosphate (MEP). The protein is 1-deoxy-D-xylulose 5-phosphate reductoisomerase of Rhodopseudomonas palustris (strain HaA2).